We begin with the raw amino-acid sequence, 268 residues long: Undecaprenyl-diphosphatase (268 aa).

A run of 8 helical transmembrane segments spans residues 3–23 (FFNL…EFIP), 46–66 (FEVL…SAKL), 84–104 (LGVL…HGFI), 107–127 (VLFE…FILL), 144–164 (YPLP…IPGV), 185–205 (AEFS…YDLF), 213–233 (FNDG…GVFV), and 246–266 (FALF…ALII).

Belongs to the UppP family.

It localises to the cell inner membrane. The catalysed reaction is di-trans,octa-cis-undecaprenyl diphosphate + H2O = di-trans,octa-cis-undecaprenyl phosphate + phosphate + H(+). In terms of biological role, catalyzes the dephosphorylation of undecaprenyl diphosphate (UPP). Confers resistance to bacitracin. The sequence is that of Undecaprenyl-diphosphatase from Brucella abortus (strain S19).